We begin with the raw amino-acid sequence, 533 residues long: tRNA(Ile)-lysidine synthase (533 aa).

21–26 (SGGADS) serves as a coordination point for ATP. The CMP/dCMP-type deaminase domain occupies 377 to 500 (DLLDTAMGEA…DLLSSHWGHV (124 aa)).

The protein belongs to the tRNA(Ile)-lysidine synthase family.

It is found in the cytoplasm. It carries out the reaction cytidine(34) in tRNA(Ile2) + L-lysine + ATP = lysidine(34) in tRNA(Ile2) + AMP + diphosphate + H(+). Its function is as follows. Ligates lysine onto the cytidine present at position 34 of the AUA codon-specific tRNA(Ile) that contains the anticodon CAU, in an ATP-dependent manner. Cytidine is converted to lysidine, thus changing the amino acid specificity of the tRNA from methionine to isoleucine. In Deinococcus deserti (strain DSM 17065 / CIP 109153 / LMG 22923 / VCD115), this protein is tRNA(Ile)-lysidine synthase.